The chain runs to 276 residues: Bis(5'-nucleosyl)-tetraphosphatase, symmetrical (276 aa).

The protein belongs to the Ap4A hydrolase family.

It catalyses the reaction P(1),P(4)-bis(5'-adenosyl) tetraphosphate + H2O = 2 ADP + 2 H(+). Functionally, hydrolyzes diadenosine 5',5'''-P1,P4-tetraphosphate to yield ADP. In Legionella pneumophila subsp. pneumophila (strain Philadelphia 1 / ATCC 33152 / DSM 7513), this protein is Bis(5'-nucleosyl)-tetraphosphatase, symmetrical.